Reading from the N-terminus, the 175-residue chain is Granulocyte colony-stimulating factor (175 aa).

Intrachain disulfides connect C37-C43 and C65-C75. An O-linked (GalNAc...) threonine glycan is attached at T134.

Belongs to the IL-6 superfamily. As to quaternary structure, monomer. In terms of processing, O-glycosylated.

The protein localises to the secreted. Granulocyte/macrophage colony-stimulating factors are cytokines that act in hematopoiesis by controlling the production, differentiation, and function of 2 related white cell populations of the blood, the granulocytes and the monocytes-macrophages. This CSF induces granulocytes. This Canis lupus familiaris (Dog) protein is Granulocyte colony-stimulating factor (CSF3).